Here is a 472-residue protein sequence, read N- to C-terminus: Adenosylhomocysteinase (472 aa).

T64, D138, and E198 together coordinate substrate. Residue 199 to 201 (TTT) coordinates NAD(+). Residues K228 and D232 each coordinate substrate. NAD(+) is bound by residues N233, 262 to 267 (GFGDVG), E285, N320, 341 to 343 (IGH), and N386.

The protein belongs to the adenosylhomocysteinase family. The cofactor is NAD(+).

The protein resides in the cytoplasm. It catalyses the reaction S-adenosyl-L-homocysteine + H2O = L-homocysteine + adenosine. Its pathway is amino-acid biosynthesis; L-homocysteine biosynthesis; L-homocysteine from S-adenosyl-L-homocysteine: step 1/1. Functionally, may play a key role in the regulation of the intracellular concentration of adenosylhomocysteine. The chain is Adenosylhomocysteinase from Prochlorococcus marinus (strain MIT 9301).